Reading from the N-terminus, the 238-residue chain is uncharacterized protein (238 aa).

An HTH gntR-type domain is found at methionine 1–lysine 68. Positions glutamate 28–aspartate 47 form a DNA-binding region, H-T-H motif.

This is an uncharacterized protein from Escherichia coli (strain K12).